The following is a 382-amino-acid chain: Lipid-A-disaccharide synthase (382 aa).

This sequence belongs to the LpxB family.

The catalysed reaction is 2-N,3-O-bis[(3R)-3-hydroxytetradecanoyl]-alpha-D-glucosaminyl 1-phosphate + UDP-2-N,3-O-bis[(3R)-3-hydroxytetradecanoyl]-alpha-D-glucosamine = lipid A disaccharide (E. coli) + UDP + H(+). It catalyses the reaction a lipid X + a UDP-2-N,3-O-bis[(3R)-3-hydroxyacyl]-alpha-D-glucosamine = a lipid A disaccharide + UDP + H(+). It participates in glycolipid biosynthesis; lipid IV(A) biosynthesis; lipid IV(A) from (3R)-3-hydroxytetradecanoyl-[acyl-carrier-protein] and UDP-N-acetyl-alpha-D-glucosamine: step 5/6. In terms of biological role, condensation of UDP-2,3-diacylglucosamine and 2,3-diacylglucosamine-1-phosphate to form lipid A disaccharide, a precursor of lipid A, a phosphorylated glycolipid that anchors the lipopolysaccharide to the outer membrane of the cell. This chain is Lipid-A-disaccharide synthase, found in Salmonella typhimurium (strain LT2 / SGSC1412 / ATCC 700720).